Consider the following 355-residue polypeptide: Phosphoribosylformylglycinamidine cyclo-ligase (355 aa).

Belongs to the AIR synthase family.

The protein resides in the cytoplasm. It catalyses the reaction 2-formamido-N(1)-(5-O-phospho-beta-D-ribosyl)acetamidine + ATP = 5-amino-1-(5-phospho-beta-D-ribosyl)imidazole + ADP + phosphate + H(+). The protein operates within purine metabolism; IMP biosynthesis via de novo pathway; 5-amino-1-(5-phospho-D-ribosyl)imidazole from N(2)-formyl-N(1)-(5-phospho-D-ribosyl)glycinamide: step 2/2. The chain is Phosphoribosylformylglycinamidine cyclo-ligase from Hamiltonella defensa subsp. Acyrthosiphon pisum (strain 5AT).